Here is a 39-residue protein sequence, read N- to C-terminus: Potassium channel toxin alpha-KTx 2.1 (39 aa).

Cystine bridges form between C7–C29, C13–C34, and C17–C36. The interval 26 to 34 (GAKCMNGKC) is interaction with Ca(2+)-activated K(+) channels. Position 39 is an asparagine amide (N39).

The protein belongs to the short scorpion toxin superfamily. Potassium channel inhibitor family. Alpha-KTx 02 subfamily. In terms of tissue distribution, expressed by the venom gland.

It is found in the secreted. In terms of biological role, blocks voltage-gated potassium channels (mKv1.1/KCNA1 (Kd&gt;25 nM), rKv1.2/KCNA2 (Kd=2 nM), mKv1.3/KCNA3 (Kd=1 nM), hKv1.5/KCNA5 (Kd&gt;25 nM) and mKv3.1/KCNC1 (Kd&gt;25 nM)) and calcium-activated potassium channels (KCa1.1/KCNMA1 and KCa3.1/KCNN4, Kd&gt;25 nM). The protein is Potassium channel toxin alpha-KTx 2.1 of Centruroides noxius (Mexican scorpion).